A 258-amino-acid polypeptide reads, in one-letter code: MSSATQSARFSPSPISVEHLGTIGYVDAWDRQRELAAERAENLGADTLLLLEHPAVYTAGRRTEPEDRPTDGTPVIDVDRGGKITWHGPGQLVGYPIVKLAEPVDVVRYVRRLEQALISVCTDLGIDCGRVDGRSGVWLPASLDNGQWLPERKVAAIGVRVQRGVALHGFSLNCNSVLTGFDAIIPCGIRDAGVTSLSRELGRDVTVEEVTPAVTAAVVAALDGALPVTDHDIERVTFDSATAEKTAAAPTFTTVQYG.

Residues 42 to 226 (NLGADTLLLL…AVVAALDGAL (185 aa)) enclose the BPL/LPL catalytic domain. Residues 80–87 (RGGKITWH), 156–158 (AIG), and 169–171 (GFS) each bind substrate. Residue C187 is the Acyl-thioester intermediate of the active site.

The protein belongs to the LipB family.

Its subcellular location is the cytoplasm. It carries out the reaction octanoyl-[ACP] + L-lysyl-[protein] = N(6)-octanoyl-L-lysyl-[protein] + holo-[ACP] + H(+). It functions in the pathway protein modification; protein lipoylation via endogenous pathway; protein N(6)-(lipoyl)lysine from octanoyl-[acyl-carrier-protein]: step 1/2. Catalyzes the transfer of endogenously produced octanoic acid from octanoyl-acyl-carrier-protein onto the lipoyl domains of lipoate-dependent enzymes. Lipoyl-ACP can also act as a substrate although octanoyl-ACP is likely to be the physiological substrate. The chain is Octanoyltransferase from Rhodococcus opacus (strain B4).